We begin with the raw amino-acid sequence, 511 residues long: Potassium voltage-gated channel subfamily A member 10 (511 aa).

A disordered region spans residues 25–44 (EPGYATDFDPTSSKGRPGSS). The helical transmembrane segment at 218–238 (VAVVSVLVVVISITIFCLETL) threads the bilayer. A helical transmembrane segment spans residues 271 to 292 (FFMVESTCIVWFTFELVLRFVV). The S-palmitoyl cysteine moiety is linked to residue Cys-293. A helical membrane pass occupies residues 303-323 (IMNIIDIISIIPYFATLITEL). Residues 339 to 358 (ILRIIRLVRVFRIFKLSRHS) form a helical; Voltage-sensor membrane-spanning segment. The chain crosses the membrane as a helical span at residues 375 to 395 (LGLLIFFLFIGVILFSSAVYF). Residues 421-426 (TVGYGD) carry the Selectivity filter motif. A helical transmembrane segment spans residues 436 to 456 (IVGTLCAIAGVLTIALPVPVI). The interval 489–511 (SRMGSTESLNKTNGSCSAEKSRK) is disordered.

Belongs to the potassium channel family. A (Shaker) (TC 1.A.1.2) subfamily. Kv1.8/KCNA10 sub-subfamily. As to quaternary structure, homotetramer. Interacts with KCN4B/POMP. Interaction with KCN4B/POMP is necessary for the modulation of channel activity by cAMP. As to expression, expressed strongly in the inner ear and weakly in skeletal muscle. Not detected in other tissues.

It is found in the membrane. It catalyses the reaction K(+)(in) = K(+)(out). With respect to regulation, the channel activity is up-regulated by cAMP. Voltage-gated potassium ion channel that mediates K(+) permeability of excitable membranes. When opened in response to the voltage difference across the membrane, KCNA10 channel selectively allows the flow of potassium ions across the membrane down their electrochemical gradient. This chain is Potassium voltage-gated channel subfamily A member 10, found in Mus musculus (Mouse).